A 122-amino-acid polypeptide reads, in one-letter code: Class I hydrophobin 2 (122 aa).

Residues 1-22 (MFARVSTLFAMFFLGLALMVSA) form the signal peptide. Disulfide bonds link cysteine 40-cysteine 101, cysteine 47-cysteine 95, cysteine 48-cysteine 81, and cysteine 102-cysteine 115.

This sequence belongs to the fungal hydrophobin family. In terms of assembly, self-assembles to form functional amyloid fibrils called rodlets. Self-assembly into fibrillar rodlets occurs spontaneously at hydrophobic:hydrophilic interfaces and the rodlets further associate laterally to form amphipathic monolayers.

It localises to the secreted. It is found in the cell wall. Its function is as follows. Aerial growth, conidiation, and dispersal of filamentous fungi in the environment rely upon a capability of their secreting small amphipathic proteins called hydrophobins (HPBs) with low sequence identity. Class I can self-assemble into an outermost layer of rodlet bundles on aerial cell surfaces, conferring cellular hydrophobicity that supports fungal growth, development and dispersal; whereas Class II form highly ordered films at water-air interfaces through intermolecular interactions but contribute nothing to the rodlet structure. Hah2 is a class I hydrophobin that is involved in aerial growth of mycelia, but does not play a role in pathogenesis. This chain is Class I hydrophobin 2, found in Heterobasidion annosum (Root rot fungus).